Reading from the N-terminus, the 656-residue chain is Heparan-alpha-glucosaminide N-acetyltransferase (656 aa).

The interval 1 to 31 is disordered; sequence MTGGSSSRRRRAEERSSAAGTERNSRREAVG. The Lumenal, vesicle portion of the chain corresponds to 1–185; sequence MTGGSSSRRR…IIVNENPVDS (185 aa). 2 N-linked (GlcNAc...) asparagine glycosylation sites follow: N137 and N157. The cysteines at positions 146 and 455 are disulfide-linked. A helical membrane pass occupies residues 186-206; that stretch reads NLPVSIAFLVGLALIVAVSLL. The Cytoplasmic portion of the chain corresponds to 207–268; sequence RLLLSLDDVN…NRLRCVDTFR (62 aa). The tract at residues 234 to 253 is disordered; the sequence is SELGSPSRADPLSADYQPET. A phosphoserine mark is found at S238 and S240. Y249 is modified (phosphotyrosine). Residues 269 to 289 form a helical membrane-spanning segment; it reads GLALVLMVFVNYGGGKYWYFK. Residue H290 is part of the active site. The Lumenal, vesicle segment spans residues 290–295; that stretch reads HSSWNG. The chain crosses the membrane as a helical span at residues 296-316; sequence LTVADLVFPWFVFIMGTSIFL. Residues 317–338 lie on the Cytoplasmic side of the membrane; the sequence is SMTSILQRGCSKLKLLGKIVWR. The helical transmembrane segment at 339–359 threads the bilayer; the sequence is SFLLICIGVIIVNPNYCLGPL. Over 360–367 the chain is Lumenal, vesicle; the sequence is SWDKVRIP. The helical transmembrane segment at 368 to 388 threads the bilayer; it reads GVLQRLGVTYFVVAVLEFFFW. The Cytoplasmic segment spans residues 389–413; that stretch reads KPVPDSCTLESSCFSLRDITSSWPQ. Residues 414–434 traverse the membrane as a helical segment; that stretch reads WLTILTLESIWLALTFFLPVP. The Lumenal, vesicle portion of the chain corresponds to 435–493; that stretch reads GCPTGYLGPGGIGDLGKYPHCTGGAAGYIDRLLLGDNHLYQHPSSTVLYHTEVAYDPEG. A helical membrane pass occupies residues 494–514; the sequence is VLGTINSIVMAFLGVQAGKIL. The Cytoplasmic portion of the chain corresponds to 515 to 522; that stretch reads VYYKDQTK. A helical transmembrane segment spans residues 523-543; that stretch reads AILTRFAAWCCILGLISIVLT. The Lumenal, vesicle segment spans residues 544 to 557; sequence KVSANEGFIPINKN. A helical membrane pass occupies residues 558–578; that stretch reads LWSISYVTTLSCFAFFILLIL. The Cytoplasmic segment spans residues 579–585; it reads YPVVDVK. The chain crosses the membrane as a helical span at residues 586–606; sequence GLWTGTPFFYPGMNSILVYVG. Topologically, residues 607-627 are lumenal, vesicle; the sequence is HEVLENYFPFQWKLADEQSHK. The helical transmembrane segment at 628 to 648 threads the bilayer; sequence EHLIQNIVATALWVLIAYVLY. A lysosomal targeting region region spans residues 641–656; it reads VLIAYVLYKKKLFWKI. Residues 649-656 are Cytoplasmic-facing; it reads KKKLFWKI.

As to quaternary structure, homooligomer. Homooligomerization is necessary for enzyme activity. Undergoes intralysosomal proteolytic cleavage; occurs within the end of the first and/or the beginning of the second luminal domain and is essential for the activation of the enzyme. Post-translationally, glycosylated. Expressed in the retina.

It is found in the lysosome membrane. The catalysed reaction is alpha-D-glucosaminyl-[heparan sulfate](n) + acetyl-CoA = N-acetyl-alpha-D-glucosaminyl-[heparan sulfate](n) + CoA + H(+). In terms of biological role, lysosomal acetyltransferase that acetylates the non-reducing terminal alpha-glucosamine residue of intralysosomal heparin or heparan sulfate, converting it into a substrate for luminal alpha-N-acetyl glucosaminidase. In Mus musculus (Mouse), this protein is Heparan-alpha-glucosaminide N-acetyltransferase (Hgsnat).